The following is a 555-amino-acid chain: 5'-nucleotidase-related protein (555 aa).

The first 25 residues, 1-25 (MKSLIGTLGLYCLFILTNNVVSSYG), serve as a signal peptide directing secretion. A divalent metal cation contacts are provided by aspartate 38, histidine 40, and aspartate 91. Asparagine 105 is a glycosylation site (N-linked (GlcNAc...) asparagine). Asparagine 123 contacts a divalent metal cation. Asparagine 198 carries an N-linked (GlcNAc...) asparagine glycan. The a divalent metal cation site is built by histidine 225 and histidine 249. An N-linked (GlcNAc...) asparagine glycan is attached at asparagine 295. AMP is bound by residues arginine 358, arginine 402, and phenylalanine 421. An N-linked (GlcNAc...) asparagine glycan is attached at asparagine 465. The AMP site is built by phenylalanine 505 and aspartate 511.

This sequence belongs to the 5'-nucleotidase family. Requires Mg(2+) as cofactor. Mn(2+) is required as a cofactor. Salivary gland (at protein level). Saliva (at protein level).

Its subcellular location is the secreted. It carries out the reaction a ribonucleoside 5'-triphosphate + 2 H2O = a ribonucleoside 5'-phosphate + 2 phosphate + 2 H(+). Its activity is regulated as follows. DEPC (2 mM), sodium fluoride (10 mM) and 4,4'-Diisothiocyano-2,2'-stilbenedisulfonic acid (DIDS, 100 uM) nearly completely abrogate activity. Concanavalin A enhances activity. Facilitates hematophagy by inhibiting ADP-dependent platelet aggregation and promoting disaggregation of ADP-stimulated platelets in the host. Cleaves adenosine triphosphate (ATP) and adenosine diphosphate (ADP) to adenosine monophosphate (AMP) and inorganic phosphate. Interacts with fibrinogen receptor integrin alpha-IIb/beta-3 (ITGA2B/ITGB3). The polypeptide is 5'-nucleotidase-related protein (Glossina morsitans morsitans (Savannah tsetse fly)).